Reading from the N-terminus, the 225-residue chain is MKAFIVRMLLIFIGAILLIQLWIFSSLVWWRTHEVDTTMFMRIDYWSDPSEPIIHEWLDYDDISDNFKHAILAGEDAKFIHHHGFDWDGIRFALERNNEEGEVVAGGSTVSQQLAKNLFLYNKRSFIRKGQETVATWMMERMWSKRRILEVYMNSVEFGKNLYGVEAAAQYYYGKSAKSLTREQAAFLAALLPDPKYYQDHRNDRKLQYRKRVILRYMNSTQIPE.

Residues 9–29 (LLIFIGAILLIQLWIFSSLVW) traverse the membrane as a helical segment.

The protein belongs to the glycosyltransferase 51 family.

The protein localises to the cell inner membrane. The catalysed reaction is [GlcNAc-(1-&gt;4)-Mur2Ac(oyl-L-Ala-gamma-D-Glu-L-Lys-D-Ala-D-Ala)](n)-di-trans,octa-cis-undecaprenyl diphosphate + beta-D-GlcNAc-(1-&gt;4)-Mur2Ac(oyl-L-Ala-gamma-D-Glu-L-Lys-D-Ala-D-Ala)-di-trans,octa-cis-undecaprenyl diphosphate = [GlcNAc-(1-&gt;4)-Mur2Ac(oyl-L-Ala-gamma-D-Glu-L-Lys-D-Ala-D-Ala)](n+1)-di-trans,octa-cis-undecaprenyl diphosphate + di-trans,octa-cis-undecaprenyl diphosphate + H(+). The protein operates within cell wall biogenesis; peptidoglycan biosynthesis. Its function is as follows. Peptidoglycan polymerase that catalyzes glycan chain elongation from lipid-linked precursors. The protein is Biosynthetic peptidoglycan transglycosylase of Acinetobacter baumannii (strain SDF).